The chain runs to 356 residues: HORMA domain-containing protein 1 (356 aa).

The 202-residue stretch at 24-225 (QQSLVLVKKL…TPFHSIKMNV (202 aa)) folds into the HORMA domain. Disordered regions lie at residues 282–305 (ETQETQEQPHRHTKEDFSTNPKMD) and 333–356 (QLEFPLSQDPQPSVPKRRKVSVPK). Over residues 288–298 (EQPHRHTKEDF) the composition is skewed to basic and acidic residues. A compositionally biased stretch (basic residues) spans 347–356 (PKRRKVSVPK).

The protein localises to the nucleus. It localises to the chromosome. In terms of biological role, plays a key role in meiotic progression by ensuring that sufficient numbers of processed DNA double-strand breaks (DSBs) are available for successful homology search, promoting synaptonemal-complex formation independently and playing key role in the male mid-pachytene checkpoint and the female meiotic prophase checkpoint. This Danio rerio (Zebrafish) protein is HORMA domain-containing protein 1 (hormad1).